We begin with the raw amino-acid sequence, 205 residues long: Protein N-terminal glutamine amidohydrolase (205 aa).

Active-site residues include C20, H74, and D90.

It belongs to the NTAQ1 family. In terms of assembly, monomer.

It catalyses the reaction N-terminal L-glutaminyl-[protein] + H2O = N-terminal L-glutamyl-[protein] + NH4(+). Mediates the side-chain deamidation of N-terminal glutamine residues to glutamate, an important step in N-end rule pathway of protein degradation. Conversion of the resulting N-terminal glutamine to glutamate renders the protein susceptible to arginylation, polyubiquitination and degradation as specified by the N-end rule. Does not act on substrates with internal or C-terminal glutamine and does not act on non-glutamine residues in any position. This is Protein N-terminal glutamine amidohydrolase (tun) from Drosophila pseudoobscura pseudoobscura (Fruit fly).